We begin with the raw amino-acid sequence, 112 residues long: ATP synthase subunit c (112 aa).

The next 2 membrane-spanning stretches (helical) occupy residues 36 to 56 (FSVL…AIGM) and 81 to 101 (MFIA…IALI).

This sequence belongs to the ATPase C chain family. In terms of assembly, F-type ATPases have 2 components, F(1) - the catalytic core - and F(0) - the membrane proton channel. F(1) has five subunits: alpha(3), beta(3), gamma(1), delta(1), epsilon(1). F(0) has three main subunits: a(1), b(2) and c(10-14). The alpha and beta chains form an alternating ring which encloses part of the gamma chain. F(1) is attached to F(0) by a central stalk formed by the gamma and epsilon chains, while a peripheral stalk is formed by the delta and b chains.

It is found in the cell inner membrane. Functionally, f(1)F(0) ATP synthase produces ATP from ADP in the presence of a proton or sodium gradient. F-type ATPases consist of two structural domains, F(1) containing the extramembraneous catalytic core and F(0) containing the membrane proton channel, linked together by a central stalk and a peripheral stalk. During catalysis, ATP synthesis in the catalytic domain of F(1) is coupled via a rotary mechanism of the central stalk subunits to proton translocation. In terms of biological role, key component of the F(0) channel; it plays a direct role in translocation across the membrane. A homomeric c-ring of between 10-14 subunits forms the central stalk rotor element with the F(1) delta and epsilon subunits. The sequence is that of ATP synthase subunit c from Campylobacter jejuni subsp. doylei (strain ATCC BAA-1458 / RM4099 / 269.97).